We begin with the raw amino-acid sequence, 220 residues long: Ribosomal RNA large subunit methyltransferase E (220 aa).

S-adenosyl-L-methionine-binding residues include G60, W62, D92, D108, and D133. The Proton acceptor role is filled by K173. Positions 197 to 220 are disordered; that stretch reads RKPKASRDKSSETFILGRQLKQPR.

This sequence belongs to the class I-like SAM-binding methyltransferase superfamily. RNA methyltransferase RlmE family.

The protein resides in the cytoplasm. The enzyme catalyses uridine(2552) in 23S rRNA + S-adenosyl-L-methionine = 2'-O-methyluridine(2552) in 23S rRNA + S-adenosyl-L-homocysteine + H(+). In terms of biological role, specifically methylates the uridine in position 2552 of 23S rRNA at the 2'-O position of the ribose in the fully assembled 50S ribosomal subunit. This chain is Ribosomal RNA large subunit methyltransferase E, found in Burkholderia ambifaria (strain ATCC BAA-244 / DSM 16087 / CCUG 44356 / LMG 19182 / AMMD) (Burkholderia cepacia (strain AMMD)).